Here is a 371-residue protein sequence, read N- to C-terminus: Flagellar P-ring protein (371 aa).

Residues 1–28 form the signal peptide; it reads MPARPTPPAVPLALALAAALAAPAPAAA.

Belongs to the FlgI family. In terms of assembly, the basal body constitutes a major portion of the flagellar organelle and consists of four rings (L,P,S, and M) mounted on a central rod.

It localises to the periplasm. The protein localises to the bacterial flagellum basal body. Its function is as follows. Assembles around the rod to form the L-ring and probably protects the motor/basal body from shearing forces during rotation. The chain is Flagellar P-ring protein from Anaeromyxobacter dehalogenans (strain 2CP-C).